A 148-amino-acid chain; its full sequence is UPF0179 protein Mevan_0979 (148 aa).

This sequence belongs to the UPF0179 family.

The protein is UPF0179 protein Mevan_0979 of Methanococcus vannielii (strain ATCC 35089 / DSM 1224 / JCM 13029 / OCM 148 / SB).